The following is a 354-amino-acid chain: Serum paraoxonase/lactonase 3 (354 aa).

Cys-42 and Cys-352 are disulfide-bonded. An N-linked (GlcNAc...) asparagine glycan is attached at Asn-50. The Ca(2+) site is built by Glu-53 and Asp-54. The Proton acceptor role is filled by His-114. Ile-116 is a Ca(2+) binding site. Ser-165 is subject to Phosphoserine. Ca(2+) contacts are provided by Asn-167, Asp-168, Asn-223, Asp-268, and Asn-269. N-linked (GlcNAc...) asparagine glycosylation is found at Asn-269 and Asn-323.

Belongs to the paraoxonase family. In terms of assembly, homodimer. The cofactor is Ca(2+). In terms of processing, glycosylated. Post-translationally, the signal sequence is not cleaved.

The protein localises to the secreted. It is found in the extracellular space. The enzyme catalyses a phenyl acetate + H2O = a phenol + acetate + H(+). The catalysed reaction is An aryl dialkyl phosphate + H2O = dialkyl phosphate + an aryl alcohol.. It carries out the reaction an N-acyl-L-homoserine lactone + H2O = an N-acyl-L-homoserine + H(+). Its function is as follows. Has low activity towards the organophosphate paraxon and aromatic carboxylic acid esters. Rapidly hydrolyzes lactones such as statin prodrugs (e.g. lovastatin). Hydrolyzes aromatic lactones and 5- or 6-member ring lactones with aliphatic substituents but not simple lactones or those with polar substituents. This is Serum paraoxonase/lactonase 3 (Pon3) from Mus musculus (Mouse).